The sequence spans 153 residues: Aspartate carbamoyltransferase regulatory chain (153 aa).

Zn(2+) contacts are provided by Cys-109, Cys-114, Cys-138, and Cys-141.

This sequence belongs to the PyrI family. As to quaternary structure, contains catalytic and regulatory chains. Zn(2+) is required as a cofactor.

Involved in allosteric regulation of aspartate carbamoyltransferase. The sequence is that of Aspartate carbamoyltransferase regulatory chain from Cenarchaeum symbiosum (strain A).